The following is a 342-amino-acid chain: Type II restriction enzyme CviAII (342 aa).

It catalyses the reaction Endonucleolytic cleavage of DNA to give specific double-stranded fragments with terminal 5'-phosphates.. Its function is as follows. A P subtype restriction enzyme that recognizes the double-stranded sequence 5'-CATG-3' and cleaves after C-1. In Chlorella (PBCV-1), this protein is Type II restriction enzyme CviAII (CVIAIIR).